The sequence spans 286 residues: Non-homologous end joining protein Ku (286 aa).

The 166-residue stretch at 10 to 175 (TVGLVSFPVR…EEVREPDFVV (166 aa)) folds into the Ku domain. The span at 226-242 (ERQERQRREAGEVRQAD) shows a compositional bias: basic and acidic residues. Positions 226-270 (ERQERQRREAGEVRQADETDEAAETEVPEVDIPASRAPGETGGEL) are disordered. A compositionally biased stretch (acidic residues) spans 243–254 (ETDEAAETEVPE).

This sequence belongs to the prokaryotic Ku family. In terms of assembly, homodimer. Interacts with LigD.

Functionally, with LigD forms a non-homologous end joining (NHEJ) DNA repair enzyme, which repairs dsDNA breaks with reduced fidelity. Binds linear dsDNA with 5'- and 3'- overhangs but not closed circular dsDNA nor ssDNA. Recruits and stimulates the ligase activity of LigD. This Actinosynnema mirum (strain ATCC 29888 / DSM 43827 / JCM 3225 / NBRC 14064 / NCIMB 13271 / NRRL B-12336 / IMRU 3971 / 101) protein is Non-homologous end joining protein Ku.